The primary structure comprises 697 residues: DNA ligase (697 aa).

Residues 36–40 (DAEYD), 85–86 (SL), and E123 contribute to the NAD(+) site. The active-site N6-AMP-lysine intermediate is the K125. NAD(+)-binding residues include R146, E182, K320, and K344. Zn(2+)-binding residues include C438, C441, C456, and C462. Positions 619–697 (PQGNTLAGKT…EDGLKALLGV (79 aa)) constitute a BRCT domain.

It belongs to the NAD-dependent DNA ligase family. LigA subfamily. The cofactor is Mg(2+). It depends on Mn(2+) as a cofactor.

The catalysed reaction is NAD(+) + (deoxyribonucleotide)n-3'-hydroxyl + 5'-phospho-(deoxyribonucleotide)m = (deoxyribonucleotide)n+m + AMP + beta-nicotinamide D-nucleotide.. In terms of biological role, DNA ligase that catalyzes the formation of phosphodiester linkages between 5'-phosphoryl and 3'-hydroxyl groups in double-stranded DNA using NAD as a coenzyme and as the energy source for the reaction. It is essential for DNA replication and repair of damaged DNA. This Bordetella petrii (strain ATCC BAA-461 / DSM 12804 / CCUG 43448) protein is DNA ligase.